The chain runs to 120 residues: Small ribosomal subunit protein bS6 (120 aa).

The disordered stretch occupies residues 93–120 (KKADTAPSSMMKTVEREEARKASQTEQA). A compositionally biased stretch (basic and acidic residues) spans 105 to 120 (TVEREEARKASQTEQA).

It belongs to the bacterial ribosomal protein bS6 family.

Binds together with bS18 to 16S ribosomal RNA. The sequence is that of Small ribosomal subunit protein bS6 from Delftia acidovorans (strain DSM 14801 / SPH-1).